The chain runs to 242 residues: Ribosomal RNA small subunit methyltransferase G (242 aa).

S-adenosyl-L-methionine-binding positions include Gly-82, Phe-87, 133-134 (AE), and Arg-152.

This sequence belongs to the methyltransferase superfamily. RNA methyltransferase RsmG family.

The protein localises to the cytoplasm. Its function is as follows. Specifically methylates the N7 position of a guanine in 16S rRNA. This is Ribosomal RNA small subunit methyltransferase G from Acetivibrio thermocellus (strain ATCC 27405 / DSM 1237 / JCM 9322 / NBRC 103400 / NCIMB 10682 / NRRL B-4536 / VPI 7372) (Clostridium thermocellum).